We begin with the raw amino-acid sequence, 388 residues long: Trans-enoyl reductase tenC (388 aa).

Position 51–54 (51–54 (VDGK)) interacts with NADP(+). 142-149 (VGVASVGM) is a substrate binding site. Residues 219–222 (SSES), Tyr-237, and 284–285 (LD) contribute to the NADP(+) site. Substrate is bound at residue 304-308 (SFTQF). An NADP(+)-binding site is contributed by 373–374 (IK).

The protein belongs to the zinc-containing alcohol dehydrogenase family. As to quaternary structure, monomer.

It functions in the pathway secondary metabolite biosynthesis. Its function is as follows. Trans-enoyl reductase; part of the gene cluster that mediates the biosynthesis of tenellin-type 2-pyridones, iron-chelating compounds involved in iron stress tolerance, competition with the natural competitor fungus Metarhizium robertsii and insect hosts infection. TenC collaborates with the hybrid PKS-NRPS synthetase tenS to catalyze the assembly of the polyketide-amino acid backbone, since tenS lacks a designated enoylreductase (ER) domain. Upon formation of the polyketide backbone on the thiotemplate of tenS, the triketide is transferred to the NRPS module and linked to tyrosine to produce the pyrrolidine-2-dione intermediates, including pretellinin A, 11-hydropretellenin A, 12-hydropretellenin A, 13-hydropretellenin A, 14-hydropretellenin A, 12-oxopretellenin A and prototellinin D. The pathway begins with the assembly of the polyketide-amino acid backbone by the hybrid PKS-NRPS tenS with the help of the enoyl reductase tenC. These enzymes catalyze the synthesis of the pyrrolidine-2-dione intermediates pretellinin A, 11-hydropretellenin A, 12-hydropretellenin A, 13-hydropretellenin A, 14-hydropretellenin A, 12-oxopretellenin A and prototellinin D. The cytochrome P450 monooxygenase tenA then catalyzes an oxidative ring expansion of pretenellin A and 14-hydropretellenin A to form the 2-pyridone core, leading to pretenellin B and pyridovericin, respectively. The cytochrome P450 monooxygenase tenB is then required for the selective N-hydroxylation of the 2-pyridone nitrogen of yield tellinin and 15-hydroxytellenin (15-HT), respectively. The UDP-glucosyltransferase GT1 and the methyltransferase MT1, located outside the tenS gene cluster, contribute to the stepwise glycosylation and methylation of 15-HT to obtain the glycoside pyridovericin-N-O-(4-O-methyl-beta-D-glucopyranoside) (PMGP). Additional related compounds such as 1-O-methyl-15-HT, (8Z)-1-O-methyl-15-HT, and O-methyltenellin A are also produced but the enzymes involved in their biosynthesis have still to be determined. The chain is Trans-enoyl reductase tenC from Beauveria bassiana (White muscardine disease fungus).